The primary structure comprises 119 residues: MARFVVVALLVQLSLFGLEAIQHPPKIQVYSRYPADNGKPNFLNCYVSGFHPSDIEVDLLKNGKKIEKVEHSDLSFSKDWSFYLLYYTEFTPNEKDEYACRVSHVTFSTPKTVKWDRNM.

A signal peptide spans 1-20; sequence MARFVVVALLVQLSLFGLEA. The Ig-like C1-type domain occupies 25–114; it reads PKIQVYSRYP…VTFSTPKTVK (90 aa). A disulfide bond links C45 and C100.

Belongs to the beta-2-microglobulin family. In terms of assembly, heterodimer of an alpha chain and a beta chain. Beta-2-microglobulin is the beta-chain of major histocompatibility complex class I molecules.

The protein localises to the secreted. In terms of biological role, component of the class I major histocompatibility complex (MHC). Involved in the presentation of peptide antigens to the immune system. The protein is Beta-2-microglobulin (B2M) of Saguinus imperator (Emperor tamarin).